The following is a 701-amino-acid chain: Polyribonucleotide nucleotidyltransferase (701 aa).

Residues Asp485 and Asp491 each contribute to the Mg(2+) site. The KH domain maps to 552–611; sequence PKIFKTTVDPEKIRDIIGPGGKMINKIIAETNVKIDIEPDGRIFVAAPDDISGNRAISMI. One can recognise an S1 motif domain in the interval 621–689; it reads GQFFLGKVTR…KLGRLSLSRK (69 aa).

It belongs to the polyribonucleotide nucleotidyltransferase family. Mg(2+) is required as a cofactor.

Its subcellular location is the cytoplasm. It carries out the reaction RNA(n+1) + phosphate = RNA(n) + a ribonucleoside 5'-diphosphate. Its function is as follows. Involved in mRNA degradation. Catalyzes the phosphorolysis of single-stranded polyribonucleotides processively in the 3'- to 5'-direction. This Caldicellulosiruptor bescii (strain ATCC BAA-1888 / DSM 6725 / KCTC 15123 / Z-1320) (Anaerocellum thermophilum) protein is Polyribonucleotide nucleotidyltransferase.